The sequence spans 161 residues: Cyclin-dependent protein kinase inhibitor SMR12 (161 aa).

The segment covering 84–93 has biased composition (acidic residues); it reads EEEEVVEEEN. The disordered stretch occupies residues 84–106; that stretch reads EEEEVVEEENDGFKTPTRPENRI.

Probable cyclin-dependent protein kinase (CDK) inhibitor that functions as a repressor of mitosis in the endoreduplication cell cycle. In Arabidopsis thaliana (Mouse-ear cress), this protein is Cyclin-dependent protein kinase inhibitor SMR12.